We begin with the raw amino-acid sequence, 195 residues long: Large ribosomal subunit protein uL5 (195 aa).

The disordered stretch occupies residues 1–25 (MARVPPPALKKDKKEKKPPKDNSKN).

This sequence belongs to the universal ribosomal protein uL5 family. In terms of assembly, component of the large ribosomal subunit.

The protein localises to the nucleus. The protein resides in the cytoplasm. Functionally, component of the ribosome, a large ribonucleoprotein complex responsible for the synthesis of proteins in the cell. The small ribosomal subunit (SSU) binds messenger RNAs (mRNAs) and translates the encoded message by selecting cognate aminoacyl-transfer RNA (tRNA) molecules. The large subunit (LSU) contains the ribosomal catalytic site termed the peptidyl transferase center (PTC), which catalyzes the formation of peptide bonds, thereby polymerizing the amino acids delivered by tRNAs into a polypeptide chain. The nascent polypeptides leave the ribosome through a tunnel in the LSU and interact with protein factors that function in enzymatic processing, targeting, and the membrane insertion of nascent chains at the exit of the ribosomal tunnel. This chain is Large ribosomal subunit protein uL5 (RpL11), found in Spodoptera frugiperda (Fall armyworm).